The chain runs to 124 residues: MNVLTYSSAKKQIIFMALYFVITGIVIRLIGYSLQGSLSAFTQAGIGDLLSGNFSVKDMFHFDFSFDMSQFDGFSLNMWGVFIKDKIHSVVNDMMPTTLGAINMLMLSKYLTLERAIKLGIKLY.

Residues 13-33 (IIFMALYFVITGIVIRLIGYS) traverse the membrane as a helical segment.

It localises to the membrane. This is an uncharacterized protein from Bacillus anthracis.